Reading from the N-terminus, the 80-residue chain is Exodeoxyribonuclease 7 small subunit (80 aa).

It belongs to the XseB family. As to quaternary structure, heterooligomer composed of large and small subunits.

It localises to the cytoplasm. It catalyses the reaction Exonucleolytic cleavage in either 5'- to 3'- or 3'- to 5'-direction to yield nucleoside 5'-phosphates.. Bidirectionally degrades single-stranded DNA into large acid-insoluble oligonucleotides, which are then degraded further into small acid-soluble oligonucleotides. This Phenylobacterium zucineum (strain HLK1) protein is Exodeoxyribonuclease 7 small subunit.